A 446-amino-acid polypeptide reads, in one-letter code: Gasdermin-A (446 aa).

Residues 1-252 (MTMFENVTRA…FILIQASDVG (252 aa)) form a triggers pyroptosis region. Residue 9-13 (RALAR) participates in a cardiolipin binding. 4 beta stranded membrane passes run 78-95 (NFSFKNMLDARVEGDVDV), 99-120 (VKVKGTAGLSRSSTLEVQTLSV), 164-180 (VTLERAGKAEGCFSLPF), and 184-198 (LGLQGSVNHKEAVTI).

The protein belongs to the gasdermin family. Homooligomer; homooligomeric ring-shaped pore complex containing 18-36 subunits when inserted in the membrane. In terms of processing, cleavage by bacterial SpeB relieves autoinhibition by releasing the N-terminal moiety (Gasdermin-A, N-terminal) that initiates pyroptosis. Post-translationally, palmitoylated. As to expression, expressed predominantly in the gastrointestinal (GI) tract and in the skin at a lower level. In the GI tract, the expression is highly restricted to the esophagus and forestomach.

It localises to the cytoplasm. Its subcellular location is the perinuclear region. The protein localises to the cytosol. It is found in the cell membrane. With respect to regulation, the full-length protein before cleavage is inactive: intramolecular interactions between N- and C-terminal domains mediate autoinhibition in the absence of activation signal. The intrinsic pyroptosis-inducing activity is carried by the released N-terminal moiety (Gasdermin-A, N-terminal) following cleavage by bacterial effector protein SpeB. In terms of biological role, this form constitutes the precursor of the pore-forming protein and acts as a sensor of bacterial infection: upon infection, specifically cleaved by bacterial effector protein SpeB in epithelial cells, releasing the N-terminal moiety (Gasdermin-A, N-terminal) that binds to membranes and forms pores, triggering pyroptosis. Its function is as follows. Pore-forming protein that causes membrane permeabilization and pyroptosis. Released upon cleavage by bacterial effector protein SpeB, and binds to membrane inner leaflet lipids. Homooligomerizes within the membrane and forms pores of 10-15 nanometers (nm) of inner diameter, triggering pyroptosis. Pyroptosis triggers the elimination of the infected skin cell, depriving the pathogen of its protective niche, while inducing an inflammatory response. This ultimately prevents bacterial penetration of the epithelial barrier and a subsequent systemic dissemination of the pathogen. Binds to cardiolipin and other acidic phospholipids, such as phosphatidylserine, which mediate its targeting to the inner leaflet membrane. The protein is Gasdermin-A (Gsdma) of Mus musculus (Mouse).